The chain runs to 95 residues: uncharacterized protein (95 aa).

This is an uncharacterized protein from Methanocaldococcus jannaschii (strain ATCC 43067 / DSM 2661 / JAL-1 / JCM 10045 / NBRC 100440) (Methanococcus jannaschii).